Reading from the N-terminus, the 375-residue chain is Trichodiene synthase (375 aa).

This sequence belongs to the trichodiene synthase family.

The enzyme catalyses (2E,6E)-farnesyl diphosphate = trichodiene + diphosphate. Its pathway is sesquiterpene biosynthesis; trichothecene biosynthesis. TS is a member of the terpene cyclase group of enzymes. It catalyzes the isomerization and cyclization of farnesyl pyro-phosphate to form trichodiene, the first cyclic intermediate in the biosynthetic pathway for trichothecenes. It serves to branch trichothecene biosynthesis from the isoprenoid pathway. The sequence is that of Trichodiene synthase (TRI5) from Gibberella zeae (strain ATCC MYA-4620 / CBS 123657 / FGSC 9075 / NRRL 31084 / PH-1) (Wheat head blight fungus).